We begin with the raw amino-acid sequence, 154 residues long: Resuscitation-promoting factor RpfD (154 aa).

A helical membrane pass occupies residues 21–41 (IVCTVFIETAVVATMFVALLG).

Belongs to the transglycosylase family. Rpf subfamily.

Its subcellular location is the cell membrane. Functionally, factor that stimulates resuscitation of dormant cells. Has peptidoglycan (PG) hydrolytic activity. PG fragments could either directly activate the resuscitation pathway of dormant bacteria or serve as a substrate for endogenous Rpf, resulting in low molecular weight products with resuscitation activity. The protein is Resuscitation-promoting factor RpfD (rpfD) of Mycobacterium tuberculosis (strain CDC 1551 / Oshkosh).